We begin with the raw amino-acid sequence, 497 residues long: NAD(P)H-quinone oxidoreductase chain 4, chloroplastic (497 aa).

A run of 14 helical transmembrane segments spans residues 5–25, 36–56, 88–108, 112–132, 135–155, 168–188, 212–232, 243–263, 275–295, 306–326, 331–351, 387–407, 418–438, and 463–483; these read VPWL…IPIL, YTLG…YCHF, LGLV…AWPI, TRLF…LFVS, ILLF…LLCL, FVLY…TMSF, VLIY…FPFH, HYST…YGLI, FLLG…ASLI, IAYS…SFTE, GAIL…FLAG, LALP…GVVT, GITV…LSML, and LFIL…PNLI.

This sequence belongs to the complex I subunit 4 family.

The protein localises to the plastid. The protein resides in the chloroplast thylakoid membrane. It catalyses the reaction a plastoquinone + NADH + (n+1) H(+)(in) = a plastoquinol + NAD(+) + n H(+)(out). It carries out the reaction a plastoquinone + NADPH + (n+1) H(+)(in) = a plastoquinol + NADP(+) + n H(+)(out). This is NAD(P)H-quinone oxidoreductase chain 4, chloroplastic from Adiantum capillus-veneris (Maidenhair fern).